The chain runs to 465 residues: tRNA-2-methylthio-N(6)-dimethylallyladenosine synthase (465 aa).

The MTTase N-terminal domain maps to 26–141 (MRAHIITYGC…LPEALKANER (116 aa)). [4Fe-4S] cluster is bound by residues C35, C71, C104, C173, C177, and C180. Residues 159 to 388 (PKGALSAHVT…IEKQKEWSYR (230 aa)) form the Radical SAM core domain. Positions 391–453 (LEWVGKTVEV…PHLLFGEVVG (63 aa)) constitute a TRAM domain.

The protein belongs to the methylthiotransferase family. MiaB subfamily. Monomer. Requires [4Fe-4S] cluster as cofactor.

It is found in the cytoplasm. The catalysed reaction is N(6)-dimethylallyladenosine(37) in tRNA + (sulfur carrier)-SH + AH2 + 2 S-adenosyl-L-methionine = 2-methylsulfanyl-N(6)-dimethylallyladenosine(37) in tRNA + (sulfur carrier)-H + 5'-deoxyadenosine + L-methionine + A + S-adenosyl-L-homocysteine + 2 H(+). Catalyzes the methylthiolation of N6-(dimethylallyl)adenosine (i(6)A), leading to the formation of 2-methylthio-N6-(dimethylallyl)adenosine (ms(2)i(6)A) at position 37 in tRNAs that read codons beginning with uridine. This is tRNA-2-methylthio-N(6)-dimethylallyladenosine synthase from Thermus thermophilus (strain ATCC BAA-163 / DSM 7039 / HB27).